A 192-amino-acid chain; its full sequence is Molybdenum cofactor guanylyltransferase (192 aa).

GTP-binding residues include K21, D67, and D101. D101 provides a ligand contact to Mg(2+).

It belongs to the MobA family. Monomer. It depends on Mg(2+) as a cofactor.

It is found in the cytoplasm. It catalyses the reaction Mo-molybdopterin + GTP + H(+) = Mo-molybdopterin guanine dinucleotide + diphosphate. In terms of biological role, transfers a GMP moiety from GTP to Mo-molybdopterin (Mo-MPT) cofactor (Moco or molybdenum cofactor) to form Mo-molybdopterin guanine dinucleotide (Mo-MGD) cofactor. The polypeptide is Molybdenum cofactor guanylyltransferase (Neisseria meningitidis serogroup C / serotype 2a (strain ATCC 700532 / DSM 15464 / FAM18)).